The following is a 1755-amino-acid chain: Transposon Ty1-GR3 Gag-Pol polyprotein (1755 aa).

3 stretches are compositionally biased toward polar residues: residues 1 to 10 (MESQQLSNYP), 48 to 60 (TKANSQQTTTPAS), and 127 to 152 (QSQFPQYPSSVGTPLSTPSPESGNTF). Disordered stretches follow at residues 1–93 (MESQ…MMTQ), 126–173 (PQSQ…RPPP), and 352–421 (GSRN…SKST). The segment covering 153-165 (TDSSSADSDMTST) has biased composition (low complexity). Residues 299–401 (NNGIHINNKV…NSKSKTARAH (103 aa)) are RNA-binding. Positions 402–418 (NVSTSNNSPSTDNDSIS) are enriched in low complexity. At serine 416 the chain carries Phosphoserine. Aspartate 461 (for protease activity; shared with dimeric partner) is an active-site residue. Residues 583–640 (NVHTSESTRKYPYPFIHRMLAHANAQTIRYSLKNNTITYFNESDVDWSSAIDYQCPDC) are integrase-type zinc finger-like. Residues 660-835 (NSYEPFQYLH…AGLDISTLLP (176 aa)) enclose the Integrase catalytic domain. Mg(2+) is bound by residues aspartate 671 and aspartate 736. A disordered region spans residues 956-1172 (SKAVSPTDST…LGGIGDSNAY (217 aa)). Over residues 960–969 (SPTDSTPPST) the composition is skewed to low complexity. Polar residues-rich tracts occupy residues 1005-1015 (STPQISNIEST) and 1031-1043 (MSQSNTHESSYAS). Over residues 1044 to 1053 (KSKDFRHSDS) the composition is skewed to basic and acidic residues. 2 stretches are compositionally biased toward polar residues: residues 1054 to 1082 (YSDNETNHTNVPISSTGGTNNKTVPQTSE) and 1095 to 1106 (SIDTSSSESNSL). The Bipartite nuclear localization signal signature appears at 1178 to 1212 (KKRSLEDNETEIKVSRDTWNTKNMRSLEPPRSKKR). Residues 1338 to 1476 (NNYYITQLDI…DILGLEIKYQ (139 aa)) form the Reverse transcriptase Ty1/copia-type domain. 6 residues coordinate Mg(2+): aspartate 1346, aspartate 1427, aspartate 1428, aspartate 1610, glutamate 1652, and aspartate 1685. The 143-residue stretch at 1610 to 1752 (DASYGNQPYY…IKTFKLLTNK (143 aa)) folds into the RNase H Ty1/copia-type domain.

The capsid protein forms a homotrimer, from which the VLPs are assembled. The protease is a homodimer, whose active site consists of two apposed aspartic acid residues. Initially, virus-like particles (VLPs) are composed of the structural unprocessed proteins Gag and Gag-Pol, and also contain the host initiator methionine tRNA (tRNA(i)-Met) which serves as a primer for minus-strand DNA synthesis, and a dimer of genomic Ty RNA. Processing of the polyproteins occurs within the particle and proceeds by an ordered pathway, called maturation. First, the protease (PR) is released by autocatalytic cleavage of the Gag-Pol polyprotein yielding capsid protein p45 and a Pol-p154 precursor protein. This cleavage is a prerequisite for subsequent processing of Pol-p154 at the remaining sites to release the mature structural and catalytic proteins. Maturation takes place prior to the RT reaction and is required to produce transposition-competent VLPs.

It localises to the cytoplasm. The protein localises to the nucleus. It catalyses the reaction DNA(n) + a 2'-deoxyribonucleoside 5'-triphosphate = DNA(n+1) + diphosphate. The catalysed reaction is Endonucleolytic cleavage to 5'-phosphomonoester.. Its function is as follows. Capsid protein (CA) is the structural component of the virus-like particle (VLP), forming the shell that encapsulates the retrotransposons dimeric RNA genome. The particles are assembled from trimer-clustered units and there are holes in the capsid shells that allow for the diffusion of macromolecules. CA also has nucleocapsid-like chaperone activity, promoting primer tRNA(i)-Met annealing to the multipartite primer-binding site (PBS), dimerization of Ty1 RNA and initiation of reverse transcription. In terms of biological role, the aspartyl protease (PR) mediates the proteolytic cleavages of the Gag and Gag-Pol polyproteins after assembly of the VLP. Reverse transcriptase/ribonuclease H (RT) is a multifunctional enzyme that catalyzes the conversion of the retro-elements RNA genome into dsDNA within the VLP. The enzyme displays a DNA polymerase activity that can copy either DNA or RNA templates, and a ribonuclease H (RNase H) activity that cleaves the RNA strand of RNA-DNA heteroduplexes during plus-strand synthesis and hydrolyzes RNA primers. The conversion leads to a linear dsDNA copy of the retrotransposon that includes long terminal repeats (LTRs) at both ends. Functionally, integrase (IN) targets the VLP to the nucleus, where a subparticle preintegration complex (PIC) containing at least integrase and the newly synthesized dsDNA copy of the retrotransposon must transit the nuclear membrane. Once in the nucleus, integrase performs the integration of the dsDNA into the host genome. The chain is Transposon Ty1-GR3 Gag-Pol polyprotein (TY1B-GR3) from Saccharomyces cerevisiae (strain ATCC 204508 / S288c) (Baker's yeast).